The following is a 159-amino-acid chain: 2-C-methyl-D-erythritol 2,4-cyclodiphosphate synthase (159 aa).

Asp-8 and His-10 together coordinate a divalent metal cation. 4-CDP-2-C-methyl-D-erythritol 2-phosphate-binding positions include 8 to 10 (DVH) and 34 to 35 (HS). Residue His-42 coordinates a divalent metal cation. 4-CDP-2-C-methyl-D-erythritol 2-phosphate contacts are provided by residues 56–58 (DIG), 61–65 (FPDTD), 132–135 (TTTE), Phe-139, and Arg-142.

This sequence belongs to the IspF family. As to quaternary structure, homotrimer. Requires a divalent metal cation as cofactor.

It catalyses the reaction 4-CDP-2-C-methyl-D-erythritol 2-phosphate = 2-C-methyl-D-erythritol 2,4-cyclic diphosphate + CMP. Its pathway is isoprenoid biosynthesis; isopentenyl diphosphate biosynthesis via DXP pathway; isopentenyl diphosphate from 1-deoxy-D-xylulose 5-phosphate: step 4/6. Functionally, involved in the biosynthesis of isopentenyl diphosphate (IPP) and dimethylallyl diphosphate (DMAPP), two major building blocks of isoprenoid compounds. Catalyzes the conversion of 4-diphosphocytidyl-2-C-methyl-D-erythritol 2-phosphate (CDP-ME2P) to 2-C-methyl-D-erythritol 2,4-cyclodiphosphate (ME-CPP) with a corresponding release of cytidine 5-monophosphate (CMP). In Syntrophobacter fumaroxidans (strain DSM 10017 / MPOB), this protein is 2-C-methyl-D-erythritol 2,4-cyclodiphosphate synthase.